The primary structure comprises 210 residues: Large ribosomal subunit protein uL3 (210 aa).

Residues 131 to 155 (GPMSHGSKYHRRVGSMSATTDPGRT) are disordered.

This sequence belongs to the universal ribosomal protein uL3 family. Part of the 50S ribosomal subunit. Forms a cluster with proteins L14 and L19.

In terms of biological role, one of the primary rRNA binding proteins, it binds directly near the 3'-end of the 23S rRNA, where it nucleates assembly of the 50S subunit. The protein is Large ribosomal subunit protein uL3 of Thermoanaerobacter sp. (strain X514).